The sequence spans 266 residues: Type III pantothenate kinase (266 aa).

Residue Asp-6 to Val-13 coordinates ATP. Gly-112 to Arg-115 provides a ligand contact to substrate. Asp-114 serves as the catalytic Proton acceptor. Asp-134 serves as a coordination point for K(+). ATP is bound at residue Thr-137. Thr-190 provides a ligand contact to substrate.

The protein belongs to the type III pantothenate kinase family. As to quaternary structure, homodimer. NH4(+) is required as a cofactor. The cofactor is K(+).

Its subcellular location is the cytoplasm. It catalyses the reaction (R)-pantothenate + ATP = (R)-4'-phosphopantothenate + ADP + H(+). It functions in the pathway cofactor biosynthesis; coenzyme A biosynthesis; CoA from (R)-pantothenate: step 1/5. Functionally, catalyzes the phosphorylation of pantothenate (Pan), the first step in CoA biosynthesis. The chain is Type III pantothenate kinase from Desulfotalea psychrophila (strain LSv54 / DSM 12343).